The sequence spans 375 residues: Queuine tRNA-ribosyltransferase (375 aa).

Catalysis depends on Asp89, which acts as the Proton acceptor. Substrate contacts are provided by residues 89 to 93 (DSGGF), Asp143, Gln187, and Gly214. An RNA binding region spans residues 245–251 (GVGKPED). Asp264 serves as the catalytic Nucleophile. The RNA binding; important for wobble base 34 recognition stretch occupies residues 269–273 (TRNAR). Residues Cys302, Cys304, Cys307, and His333 each coordinate Zn(2+).

This sequence belongs to the queuine tRNA-ribosyltransferase family. Homodimer. Within each dimer, one monomer is responsible for RNA recognition and catalysis, while the other monomer binds to the replacement base PreQ1. It depends on Zn(2+) as a cofactor.

It carries out the reaction 7-aminomethyl-7-carbaguanine + guanosine(34) in tRNA = 7-aminomethyl-7-carbaguanosine(34) in tRNA + guanine. Its pathway is tRNA modification; tRNA-queuosine biosynthesis. Functionally, catalyzes the base-exchange of a guanine (G) residue with the queuine precursor 7-aminomethyl-7-deazaguanine (PreQ1) at position 34 (anticodon wobble position) in tRNAs with GU(N) anticodons (tRNA-Asp, -Asn, -His and -Tyr). Catalysis occurs through a double-displacement mechanism. The nucleophile active site attacks the C1' of nucleotide 34 to detach the guanine base from the RNA, forming a covalent enzyme-RNA intermediate. The proton acceptor active site deprotonates the incoming PreQ1, allowing a nucleophilic attack on the C1' of the ribose to form the product. After dissociation, two additional enzymatic reactions on the tRNA convert PreQ1 to queuine (Q), resulting in the hypermodified nucleoside queuosine (7-(((4,5-cis-dihydroxy-2-cyclopenten-1-yl)amino)methyl)-7-deazaguanosine). The chain is Queuine tRNA-ribosyltransferase from Aliivibrio fischeri (strain ATCC 700601 / ES114) (Vibrio fischeri).